The primary structure comprises 156 residues: Ribonuclease H (156 aa).

The 143-residue stretch at 2 to 144 folds into the RNase H type-1 domain; it reads SQFDVTVFTD…CDVLARAQAS (143 aa). Mg(2+) contacts are provided by aspartate 11, glutamate 49, aspartate 71, and aspartate 136.

It belongs to the RNase H family. Monomer. It depends on Mg(2+) as a cofactor.

The protein resides in the cytoplasm. It catalyses the reaction Endonucleolytic cleavage to 5'-phosphomonoester.. Its function is as follows. Endonuclease that specifically degrades the RNA of RNA-DNA hybrids. This chain is Ribonuclease H, found in Nitratidesulfovibrio vulgaris (strain ATCC 29579 / DSM 644 / CCUG 34227 / NCIMB 8303 / VKM B-1760 / Hildenborough) (Desulfovibrio vulgaris).